The sequence spans 179 residues: Large ribosomal subunit protein uL6c (179 aa).

Belongs to the universal ribosomal protein uL6 family. In terms of assembly, part of the 50S ribosomal subunit.

The protein localises to the plastid. Its subcellular location is the chloroplast. Its function is as follows. Binds 23S rRNA. The protein is Large ribosomal subunit protein uL6c (rpl6) of Trieres chinensis (Marine centric diatom).